Here is a 784-residue protein sequence, read N- to C-terminus: Protein DBF4 homolog B (784 aa).

In terms of domain architecture, BRCT spans 27–117 (CREITFAGKS…SRGKQLLKKV (91 aa)). A disordered region spans residues 222-243 (TVKKKDPGDQEEEEGQRSQKPQ). Residues 244–293 (ARKRKGYCECCEETFDTLSEHLVGEHHFRFVSNPLSYKMIDDLAAQLTCD) form a DBF4-type zinc finger. Zn(2+) contacts are provided by C251, C254, H264, and H270. 3 disordered regions span residues 299-332 (FGSP…GNEG), 348-368 (HADC…AEEP), and 495-529 (TVGS…AQPA). Residues 498 to 507 (SQGDVTSHSA) are compositionally biased toward polar residues.

In terms of assembly, forms a complex with cdc7. Phosphorylated. Stably phosphorylated throughout the cell cycle.

The protein resides in the nucleus. Regulatory subunit for cdc7 which activates its kinase activity thereby playing a central role in DNA replication and cell proliferation. Specifically required during the initiation of DNA replication in egg and during early embryonic development. The complex cdc7-dbf4b phosphorylates mcm2 and mcm4 subunits and is required for cdc45 loading. This Xenopus laevis (African clawed frog) protein is Protein DBF4 homolog B (dbf4b).